The primary structure comprises 426 residues: Synaptotagmin-13 (426 aa).

Residues 1 to 6 are Vesicular-facing; it reads MVLSVP. A helical transmembrane segment spans residues 7–29; it reads VIALGATLGTATSILALCGVTCL. Residues 30-426 lie on the Cytoplasmic side of the membrane; the sequence is CRHMHPKKGL…QIAMWHQLHL (397 aa). C2 domains are found at residues 158 to 275 and 287 to 422; these read QAPK…AQWG and GAGE…AMWH.

The protein belongs to the synaptotagmin family. In terms of assembly, interacts with NRXN1. As to expression, expressed in brain, pancreas and kidney.

It localises to the membrane. Its function is as follows. May be involved in transport vesicle docking to the plasma membrane. In Homo sapiens (Human), this protein is Synaptotagmin-13 (SYT13).